Reading from the N-terminus, the 464-residue chain is Adenylyltransferase and sulfurtransferase MOCS3 (464 aa).

ATP-binding positions include glycine 101, aspartate 122, 129-133 (NNMHR), lysine 146, and 190-191 (DN). Zn(2+) contacts are provided by cysteine 231 and cysteine 234. Cysteine 248 serves as the catalytic Glycyl thioester intermediate; for adenylyltransferase activity. Residues cysteine 306 and cysteine 309 each contribute to the Zn(2+) site. In terms of domain architecture, Rhodanese spans 358-462 (KKEQHVLLDV…WAANVNPNFP (105 aa)). Cysteine 422 serves as the catalytic Cysteine persulfide intermediate; for sulfurtransferase activity.

In the N-terminal section; belongs to the HesA/MoeB/ThiF family. UBA4 subfamily. Zn(2+) serves as cofactor.

It is found in the cytoplasm. The enzyme catalyses [molybdopterin-synthase sulfur-carrier protein]-C-terminal Gly-Gly + ATP + H(+) = [molybdopterin-synthase sulfur-carrier protein]-C-terminal Gly-Gly-AMP + diphosphate. It carries out the reaction [molybdopterin-synthase sulfur-carrier protein]-C-terminal Gly-Gly-AMP + S-sulfanyl-L-cysteinyl-[cysteine desulfurase] + AH2 = [molybdopterin-synthase sulfur-carrier protein]-C-terminal-Gly-aminoethanethioate + L-cysteinyl-[cysteine desulfurase] + A + AMP + 2 H(+). It participates in tRNA modification; 5-methoxycarbonylmethyl-2-thiouridine-tRNA biosynthesis. The protein operates within cofactor biosynthesis; molybdopterin biosynthesis. Plays a central role in 2-thiolation of mcm(5)S(2)U at tRNA wobble positions of cytosolic tRNA(Lys), tRNA(Glu) and tRNA(Gln). Also essential during biosynthesis of the molybdenum cofactor. Acts by mediating the C-terminal thiocarboxylation of sulfur carriers URM1 and MOCS2A. Its N-terminus first activates URM1 and MOCS2A as acyl-adenylates (-COAMP), then the persulfide sulfur on the catalytic cysteine is transferred to URM1 and MOCS2A to form thiocarboxylation (-COSH) of their C-terminus. The reaction probably involves hydrogen sulfide that is generated from the persulfide intermediate and that acts as a nucleophile towards URM1 and MOCS2A. Subsequently, a transient disulfide bond is formed. Does not use thiosulfate as sulfur donor; NFS1 probably acting as a sulfur donor for thiocarboxylation reactions. The chain is Adenylyltransferase and sulfurtransferase MOCS3 from Arabidopsis thaliana (Mouse-ear cress).